A 664-amino-acid polypeptide reads, in one-letter code: 1,4-alpha-glucan branching enzyme GlgB 2 (664 aa).

The span at 1–17 (MGGKEMRNCKELKHEKN) shows a compositional bias: basic and acidic residues. Residues 1 to 31 (MGGKEMRNCKELKHEKNGNVTEKVGKNKGKS) form a disordered region. D342 (nucleophile) is an active-site residue. E395 functions as the Proton donor in the catalytic mechanism.

The protein belongs to the glycosyl hydrolase 13 family. GlgB subfamily. In terms of assembly, monomer.

The enzyme catalyses Transfers a segment of a (1-&gt;4)-alpha-D-glucan chain to a primary hydroxy group in a similar glucan chain.. The protein operates within glycan biosynthesis; glycogen biosynthesis. Catalyzes the formation of the alpha-1,6-glucosidic linkages in glycogen by scission of a 1,4-alpha-linked oligosaccharide from growing alpha-1,4-glucan chains and the subsequent attachment of the oligosaccharide to the alpha-1,6 position. This Clostridium perfringens (strain 13 / Type A) protein is 1,4-alpha-glucan branching enzyme GlgB 2 (glgB2).